The following is a 245-amino-acid chain: 8-amino-3,8-dideoxy-manno-octulosonate cytidylyltransferase (245 aa).

It belongs to the KdsB family.

It localises to the cytoplasm. It carries out the reaction 8-amino-3,8-dideoxy-alpha-D-manno-octulosonate + CTP = CMP-8-amino-3,8-dideoxy-alpha-D-manno-oct-2-ulosonate + diphosphate. Its pathway is bacterial outer membrane biogenesis; lipopolysaccharide biosynthesis. In terms of biological role, activates KDO8N (a required 8-carbon sugar) for incorporation into bacterial lipopolysaccharide in the Shewanella genus. The polypeptide is 8-amino-3,8-dideoxy-manno-octulosonate cytidylyltransferase (Shewanella putrefaciens (strain CN-32 / ATCC BAA-453)).